The chain runs to 129 residues: uncharacterized protein (129 aa).

3 consecutive transmembrane segments (helical) span residues 49 to 69 (LWSL…IVGV), 72 to 92 (FTIF…NLIF), and 101 to 118 (YFNC…NLLQ).

It is found in the membrane. This is an uncharacterized protein from Saccharomyces cerevisiae (strain ATCC 204508 / S288c) (Baker's yeast).